Reading from the N-terminus, the 261-residue chain is Receptor expression-enhancing protein 4 (261 aa).

The next 2 helical transmembrane spans lie at 1–21 (MVSW…YPAY) and 35–55 (YVRW…ETFT). The tract at residues 167 to 261 (YTDALYPDEP…KKPAQSEPEN (95 aa)) is disordered. Over residues 221–230 (KSLQRSQSLR) the composition is skewed to polar residues.

This sequence belongs to the DP1 family. As to quaternary structure, interacts with microtubules. During gastrulation, expressed on the dorsal side of the embryo and then in the neural plate and neural tube. At tailbud stages, expressed in the somites, neural tube and otic vesicle.

It localises to the endoplasmic reticulum membrane. In terms of biological role, microtubule-binding protein required to ensure proper cell division and nuclear envelope reassembly by sequestering the endoplasmic reticulum away from chromosomes during mitosis. Probably acts by clearing the endoplasmic reticulum membrane from metaphase chromosomes. May play a role in the maintenance of both the nervous system and the musculature. This is Receptor expression-enhancing protein 4 (reep4) from Xenopus laevis (African clawed frog).